Here is a 130-residue protein sequence, read N- to C-terminus: Small ribosomal subunit protein uS9 (130 aa).

The interval 102–130 (GFLTRDPRMKERKKYGLKKARRAPQFSKR) is disordered. Positions 111–130 (KERKKYGLKKARRAPQFSKR) are enriched in basic residues.

This sequence belongs to the universal ribosomal protein uS9 family.

The polypeptide is Small ribosomal subunit protein uS9 (Clostridium novyi (strain NT)).